A 31-amino-acid chain; its full sequence is MLIQLKIKLLLLLLLYLLYIFYVFLWKQSEF.

In terms of biological role, involved in control of the biosynthesis of leucine. This Buchnera aphidicola subsp. Rhopalosiphum padi protein is leu operon leader peptide (leuL).